The chain runs to 468 residues: Cysteine--tRNA ligase (468 aa).

Cys28 lines the Zn(2+) pocket. The 'HIGH' region motif lies at 30 to 40 (PTVYNYIHIGN). The Zn(2+) site is built by Cys212, His237, and Glu241. Positions 271-275 (KMSKS) match the 'KMSKS' region motif. Residue Lys274 coordinates ATP.

Belongs to the class-I aminoacyl-tRNA synthetase family. Monomer. It depends on Zn(2+) as a cofactor.

It is found in the cytoplasm. The catalysed reaction is tRNA(Cys) + L-cysteine + ATP = L-cysteinyl-tRNA(Cys) + AMP + diphosphate. The polypeptide is Cysteine--tRNA ligase (Latilactobacillus sakei subsp. sakei (strain 23K) (Lactobacillus sakei subsp. sakei)).